Reading from the N-terminus, the 214-residue chain is ATP-dependent Clp protease proteolytic subunit (214 aa).

Catalysis depends on Ser113, which acts as the Nucleophile. His138 is a catalytic residue.

The protein belongs to the peptidase S14 family. Fourteen ClpP subunits assemble into 2 heptameric rings which stack back to back to give a disk-like structure with a central cavity, resembling the structure of eukaryotic proteasomes.

The protein resides in the cytoplasm. The catalysed reaction is Hydrolysis of proteins to small peptides in the presence of ATP and magnesium. alpha-casein is the usual test substrate. In the absence of ATP, only oligopeptides shorter than five residues are hydrolyzed (such as succinyl-Leu-Tyr-|-NHMec, and Leu-Tyr-Leu-|-Tyr-Trp, in which cleavage of the -Tyr-|-Leu- and -Tyr-|-Trp bonds also occurs).. Its function is as follows. Cleaves peptides in various proteins in a process that requires ATP hydrolysis. Has a chymotrypsin-like activity. Plays a major role in the degradation of misfolded proteins. In Alkalilimnicola ehrlichii (strain ATCC BAA-1101 / DSM 17681 / MLHE-1), this protein is ATP-dependent Clp protease proteolytic subunit.